A 489-amino-acid chain; its full sequence is Serine/arginine-rich splicing factor 4 (489 aa).

Positions 2-72 constitute an RRM 1 domain; sequence PRVYIGRLSY…ERVIVEHARG (71 aa). Disordered stretches follow at residues 72-95 and 169-489; these read GPRRDGSYGSGRSGYGYRRSGRDK and KIRL…HSRS. Ser78 and Ser84 each carry phosphoserine. Residues 104–177 form the RRM 2 domain; that stretch reads YRLIVENLSS…RKIRLVEDKP (74 aa). Basic residues-rich tracts occupy residues 179–206 and 214–246; these read SRRRRSYSRSRSHSRSRSRSRHSRKSRS and SHSKSRSRSRSGSHSRSKSRSRSQSRSRSKKEK. Residues 247–279 are compositionally biased toward basic and acidic residues; it reads SRSPSKDNKSRSRSRSPDKSRSKSKDHAEDKLQ. Residues Ser289, Ser291, and Ser293 each carry the phosphoserine modification. The segment covering 293–332 has biased composition (basic and acidic residues); sequence SRHDSKSRSRSQERRAEEERRRSVSRARSQEKSRSQEKSL. Positions 333-356 are enriched in basic residues; that stretch reads LKSRSRSRSRSRSRSKDKRKGRKR. Basic and acidic residues-rich tracts occupy residues 357–370 and 394–426; these read SRDESRSRSRSKSE and KDTDHSRSPSRSVSKEREHAKAESGQRGSRAEG. A phosphoserine mark is found at Ser441, Ser453, and Ser455. Composition is skewed to basic residues over residues 456–469 and 479–489; these read RSKSASKTRSRSKS and SRSRSRSHSRS.

Belongs to the splicing factor SR family. Found in a pre-mRNA splicing complex with SRSF4/SFRS4, SRSF5/SFRS5, SNRNP70, SNRPA1, SRRM1 and SRRM2. Interacts with PNN. Extensively phosphorylated on serine residues in the RS domain.

It localises to the nucleus speckle. Functionally, plays a role in alternative splice site selection during pre-mRNA splicing. Represses the splicing of MAPT/Tau exon 10. This chain is Serine/arginine-rich splicing factor 4 (Srsf4), found in Mus musculus (Mouse).